We begin with the raw amino-acid sequence, 291 residues long: Shikimate dehydrogenase (NADP(+)) (291 aa).

Residues 23 to 25 (SFS) and T70 contribute to the shikimate site. The Proton acceptor role is filled by K74. Shikimate-binding residues include N95 and D110. Residues 135–139 (GAGGA) and L232 each bind NADP(+). Y234 is a binding site for shikimate. G255 serves as a coordination point for NADP(+).

It belongs to the shikimate dehydrogenase family. Homodimer.

It catalyses the reaction shikimate + NADP(+) = 3-dehydroshikimate + NADPH + H(+). The protein operates within metabolic intermediate biosynthesis; chorismate biosynthesis; chorismate from D-erythrose 4-phosphate and phosphoenolpyruvate: step 4/7. In terms of biological role, involved in the biosynthesis of the chorismate, which leads to the biosynthesis of aromatic amino acids. Catalyzes the reversible NADPH linked reduction of 3-dehydroshikimate (DHSA) to yield shikimate (SA). The polypeptide is Shikimate dehydrogenase (NADP(+)) (Desulforamulus reducens (strain ATCC BAA-1160 / DSM 100696 / MI-1) (Desulfotomaculum reducens)).